Here is a 176-residue protein sequence, read N- to C-terminus: RNA pyrophosphohydrolase (176 aa).

Residues 6-149 (GYRPNVGIVI…KRDVYRRVMK (144 aa)) enclose the Nudix hydrolase domain. A Nudix box motif is present at residues 38–59 (GGINPGESPEQAMYRELFEEVG).

Belongs to the Nudix hydrolase family. RppH subfamily. The cofactor is a divalent metal cation.

Functionally, accelerates the degradation of transcripts by removing pyrophosphate from the 5'-end of triphosphorylated RNA, leading to a more labile monophosphorylated state that can stimulate subsequent ribonuclease cleavage. In Proteus mirabilis (strain HI4320), this protein is RNA pyrophosphohydrolase.